Consider the following 283-residue polypeptide: Non-selective voltage-gated ion channel VDAC1 (283 aa).

Ala2 is subject to N-acetylalanine. Lys12 provides a ligand contact to ATP. A Glycyl lysine isopeptide (Lys-Gly) (interchain with G-Cter in ubiquitin) cross-link involves residue Lys12. At Ser13 the chain carries Phosphoserine. Position 19 is a phosphothreonine (Thr19). Lys20 provides a ligand contact to ATP. Lys20 bears the N6-acetyllysine; alternate mark. The residue at position 20 (Lys20) is an N6-succinyllysine; alternate. Lys20 is covalently cross-linked (Glycyl lysine isopeptide (Lys-Gly) (interchain with G-Cter in ubiquitin); alternate). Beta stranded transmembrane passes span 26-35 and 39-47; these read LIKLDLKTKS and LEFTSSGSA. Residues Lys53 and Lys61 each participate in a glycyl lysine isopeptide (Lys-Gly) (interchain with G-Cter in ubiquitin) cross-link. Residues 54–64 traverse the membrane as a beta stranded segment; that stretch reads VTGSLETKYRW. Tyr67 carries the post-translational modification Phosphotyrosine. 3 beta stranded membrane passes run 69 to 76, 80 to 89, and 95 to 104; these read LTFTEKWN, TLGTEITVED, and LKLTFDSSFS. Thr107 is modified (phosphothreonine). Lys109 carries the post-translational modification N6-acetyllysine; alternate. Residue Lys109 forms a Glycyl lysine isopeptide (Lys-Gly) (interchain with G-Cter in ubiquitin); alternate linkage. Lys110 is covalently cross-linked (Glycyl lysine isopeptide (Lys-Gly) (interchain with G-Cter in ubiquitin)). Transmembrane regions (beta stranded) follow at residues 111–120, 123–130, 137–145, and 150–158; these read NAKIKTGYKR, INLGCDMD, SIRGALVLG, and LAGYQMNFE. Lys161 is covalently cross-linked (Glycyl lysine isopeptide (Lys-Gly) (interchain with G-Cter in ubiquitin)). The next 6 membrane-spanning stretches (beta stranded) occupy residues 163–175, 178–185, 189–198, 202–211, 218–227, and 231–238; these read RVTQSNFAVGYKT, FQLHTNVN, EFGGSIYQKV, LETAVNLAWT, RFGIAAKYQI, and ACFSAKVN. At Ser193 the chain carries Phosphoserine; by NEK1. At Ser240 the chain carries Phosphoserine. Residue 242 to 244 coordinates NAD(+); it reads LIG. The beta stranded transmembrane segment at 242–251 threads the bilayer; sequence LIGLGYTQTL. Lys252 is subject to N6-acetyllysine. Residues 254-263 form a beta stranded membrane-spanning segment; sequence GIKLTLSALL. 260–264 serves as a coordination point for NAD(+); it reads SALLD. Position 266 is an N6-acetyllysine; alternate (Lys266). Lys266 is covalently cross-linked (Glycyl lysine isopeptide (Lys-Gly) (interchain with G-Cter in ubiquitin); alternate). Residues 273-282 traverse the membrane as a beta stranded segment; that stretch reads HKLGLGLEFQ. Lys274 participates in a covalent cross-link: Glycyl lysine isopeptide (Lys-Gly) (interchain with G-Cter in ubiquitin).

The protein belongs to the eukaryotic mitochondrial porin family. Homodimer and homotrimer; in response to cyclic AMP or calcium; oligomerization is required for scramblase activity. Component of the mitochondrial permeability transition pore complex (mPTPC), at least composed of SPG7, VDAC1 and PPIF. Interacts with SPG7, NIPSNAP2 and SLC25A30. Interacts with hexokinases including HK1. The HK1-VDAC1 complex interacts with ATF2. Interacts with BCL2L1. Interacts with BAK1. Interacts with RTL10/BOP (via BH3 domain). Interacts with amyloid-beta and APP; induces VDAC1 dephosphorylation. Interacts with TMEM41B. Interacts with BCAP31. Interacts with HSPA9; this interaction couples ITPR1 to VDAC1. In terms of assembly, (Microbial infection) Interacts with influenza A virus PB1-F2 protein. In terms of processing, phosphorylation at Ser-193 by NEK1 promotes the closed conformational state preventing excessive mitochondrial membrane permeability and subsequent apoptotic cell death after injury. Phosphorylation by the AKT-GSK3B axis stabilizes the protein probably by preventing ubiquitin-mediated proteasomal degradation. Post-translationally, ubiquitinated. Undergoes monoubiquitination and polyubiquitination by PRKN; monoubiquitination at Lys-274 inhibits apoptosis, whereas polyubiquitination leads to its degradation and promotes mitophagy. Deubiquitinated by USP30. In terms of tissue distribution, expressed in erythrocytes (at protein level). Expressed in heart, liver and skeletal muscle.

It localises to the mitochondrion outer membrane. Its subcellular location is the cell membrane. The protein localises to the membrane raft. It carries out the reaction chloride(in) = chloride(out). The catalysed reaction is K(+)(in) = K(+)(out). It catalyses the reaction ATP(in) = ATP(out). The enzyme catalyses Ca(2+)(in) = Ca(2+)(out). It carries out the reaction Na(+)(in) = Na(+)(out). The catalysed reaction is Mg(2+)(in) = Mg(2+)(out). It catalyses the reaction L-glutamate(out) = L-glutamate(in). The enzyme catalyses dopamine(out) = dopamine(in). It carries out the reaction acetylcholine(in) = acetylcholine(out). The catalysed reaction is Fe(III)-[cytochrome c](out) = Fe(III)-[cytochrome c](in). It catalyses the reaction a 1,2-diacyl-sn-glycero-3-phosphocholine(in) = a 1,2-diacyl-sn-glycero-3-phosphocholine(out). The enzyme catalyses a 1,2-diacyl-sn-glycero-3-phospho-L-serine(in) = a 1,2-diacyl-sn-glycero-3-phospho-L-serine(out). Its activity is regulated as follows. Inhibited by nitric oxide. Non-selective voltage-gated ion channel that mediates the transport of anions and cations through the mitochondrion outer membrane and plasma membrane. The channel at the outer mitochondrial membrane allows diffusion of small hydrophilic molecules; in the plasma membrane it is involved in cell volume regulation and apoptosis. It adopts an open conformation at low or zero membrane potential and a closed conformation at potentials above 30-40 mV. The open state has a weak anion selectivity whereas the closed state is cation-selective. Binds various signaling molecules, including the sphingolipid ceramide, the phospholipid phosphatidylcholine, and the sterols cholesterol and oxysterol. In depolarized mitochondria, acts downstream of PRKN and PINK1 to promote mitophagy or prevent apoptosis; polyubiquitination by PRKN promotes mitophagy, while monoubiquitination by PRKN decreases mitochondrial calcium influx which ultimately inhibits apoptosis. May participate in the formation of the permeability transition pore complex (PTPC) responsible for the release of mitochondrial products that triggers apoptosis. May mediate ATP export from cells. Part of a complex composed of HSPA9, ITPR1 and VDAC1 that regulates mitochondrial calcium-dependent apoptosis by facilitating calcium transport from the ER lumen to the mitochondria intermembrane space thus providing calcium for the downstream calcium channel MCU that directly releases it into mitochondria matrix. Mediates cytochrome c efflux. In terms of biological role, catalyzes the scrambling of phospholipids across the outer mitochondrial membrane; the mechanism is unrelated to channel activity and is capable of translocating both anionic and zwitterionic phospholipids. The protein is Non-selective voltage-gated ion channel VDAC1 of Homo sapiens (Human).